Consider the following 298-residue polypeptide: Apolipoprotein E (298 aa).

Positions 1–18 (MKVLWAALVVTLLAGCRA) are cleaved as a signal peptide. Repeat copies occupy residues 74 to 94 (LLIE…EKEL), 95 to 116 (GPVA…QARL), 117 to 138 (GADM…QAML), 139 to 160 (GQSS…RKRL), 161 to 182 (QRDI…QEGA), 183 to 203 (ERGV…GRLQ), 204 to 221 (ALTS…GEQM), and 222 to 243 (RGRL…REQM). Positions 95 to 243 (GPVAEDTKAR…DRLEEVREQM (149 aa)) are 8 X 22 AA approximate tandem repeats. Residue M137 is modified to Methionine sulfoxide. S141 bears the Phosphoserine mark. The interval 151-161 (SHLRKMRKRLQ) is LDL and other lipoprotein receptors binding. 155–158 (KMRK) provides a ligand contact to heparin. A lipid-binding and lipoprotein association region spans residues 203–271 (QALTSQPLQE…KSWFEPMMED (69 aa)). 217–224 (WGEQMRGR) is a heparin binding site. Positions 259 to 271 (ARLKSWFEPMMED) are specificity for association with VLDL.

The protein belongs to the apolipoprotein A1/A4/E family. Homotetramer. May interact with ABCA1; functionally associated with ABCA1 in the biogenesis of HDLs. May interact with APP/A4 amyloid-beta peptide; the interaction is extremely stable in vitro but its physiological significance is unclear. May interact with MAPT. May interact with MAP2. In the cerebrospinal fluid, interacts with secreted SORL1. Interacts with PMEL; this allows the loading of PMEL luminal fragment on ILVs to induce fibril nucleation. APOE exists as multiple glycosylated and sialylated glycoforms within cells and in plasma. The extent of glycosylation and sialylation are tissue and context specific. Post-translationally, glycated in plasma VLDL. In terms of processing, phosphorylated by FAM20C in the extracellular medium.

It localises to the secreted. Its subcellular location is the extracellular space. It is found in the extracellular matrix. The protein localises to the extracellular vesicle. The protein resides in the endosome. It localises to the multivesicular body. In terms of biological role, APOE is an apolipoprotein, a protein associating with lipid particles, that mainly functions in lipoprotein-mediated lipid transport between organs via the plasma and interstitial fluids. APOE is a core component of plasma lipoproteins and is involved in their production, conversion and clearance. Apolipoproteins are amphipathic molecules that interact both with lipids of the lipoprotein particle core and the aqueous environment of the plasma. As such, APOE associates with chylomicrons, chylomicron remnants, very low density lipoproteins (VLDL) and intermediate density lipoproteins (IDL) but shows a preferential binding to high-density lipoproteins (HDL). It also binds a wide range of cellular receptors including the LDL receptor/LDLR, the LDL receptor-related proteins LRP1, LRP2 and LRP8 and the very low-density lipoprotein receptor/VLDLR that mediate the cellular uptake of the APOE-containing lipoprotein particles. Finally, APOE also has a heparin-binding activity and binds heparan-sulfate proteoglycans on the surface of cells, a property that supports the capture and the receptor-mediated uptake of APOE-containing lipoproteins by cells. A main function of APOE is to mediate lipoprotein clearance through the uptake of chylomicrons, VLDLs, and HDLs by hepatocytes. APOE is also involved in the biosynthesis by the liver of VLDLs as well as their uptake by peripheral tissues ensuring the delivery of triglycerides and energy storage in muscle, heart and adipose tissues. By participating in the lipoprotein-mediated distribution of lipids among tissues, APOE plays a critical role in plasma and tissues lipid homeostasis. APOE is also involved in two steps of reverse cholesterol transport, the HDLs-mediated transport of cholesterol from peripheral tissues to the liver, and thereby plays an important role in cholesterol homeostasis. First, it is functionally associated with ABCA1 in the biogenesis of HDLs in tissues. Second, it is enriched in circulating HDLs and mediates their uptake by hepatocytes. APOE also plays an important role in lipid transport in the central nervous system, regulating neuron survival and sprouting. The polypeptide is Apolipoprotein E (APOE) (Cavia tschudii (Montane guinea pig)).